Here is a 241-residue protein sequence, read N- to C-terminus: Sugar fermentation stimulation protein homolog (241 aa).

Belongs to the SfsA family.

The polypeptide is Sugar fermentation stimulation protein homolog (Thermosynechococcus vestitus (strain NIES-2133 / IAM M-273 / BP-1)).